The primary structure comprises 736 residues: Microtubule-associated protein mu-2 (736 aa).

Belongs to the orthoreovirus mu-2 protein family. Interacts with protein mu-NS; in viral inclusions. Interacts with polymerase lambda-3; this interaction stimulates the ATPase activity of mu-2. A divalent metal cation is required as a cofactor.

Its subcellular location is the virion. It is found in the host cytoplasm. It localises to the host cytoskeleton. Minor inner capsid (core) component. Displays NTPase and RNA 5'-triphosphatase (RTPase) activities. ATP is the preferred substrate for hydrolysis. May function as a cofactor of polymerase lambda-3. Associates with microtubules and plays a role in the formation, structural organization and morphology of viral inclusions, where the assembly of cores and the replication of viral RNA occur. Together with mu-NS, recruits the other core proteins to these inclusions. This chain is Microtubule-associated protein mu-2 (M1), found in Mammalia (T2J).